A 528-amino-acid polypeptide reads, in one-letter code: (R)-citramalate synthase (528 aa).

Residues 5-271 (VYIYDTTLRD…IPQENLKKLT (267 aa)) form the Pyruvate carboxyltransferase domain.

This sequence belongs to the alpha-IPM synthase/homocitrate synthase family.

It catalyses the reaction pyruvate + acetyl-CoA + H2O = (3R)-citramalate + CoA + H(+). It functions in the pathway amino-acid biosynthesis; L-isoleucine biosynthesis; 2-oxobutanoate from pyruvate: step 1/3. In terms of biological role, catalyzes the condensation of pyruvate and acetyl-coenzyme A to form (R)-citramalate. This Aquifex aeolicus (strain VF5) protein is (R)-citramalate synthase.